A 329-amino-acid polypeptide reads, in one-letter code: Minor capsid protein A1 (329 aa).

The interval 143 to 162 is disordered; the sequence is GPSPVPGPNPDPPLEPPPGT. Positions 145–161 are enriched in pro residues; that stretch reads SPVPGPNPDPPLEPPPG.

Its subcellular location is the virion. Minor capsid protein. This is Minor capsid protein A1 from Qbeta virus (strain MX1).